We begin with the raw amino-acid sequence, 389 residues long: Probable zinc transporter zip2 (389 aa).

7 consecutive transmembrane segments (helical) span residues 6–26, 48–68, 88–108, 267–289, 305–325, 329–349, and 368–388; these read GWILSLSINAFCVFGASGIYL, LVTGLATSSGILLYSSWASVM, VFQFCAFFFGGIVFYIFNHFL, VLVAMSIHNIVEGFTIAYPLYLA, SCSLPLGSLIAFLVMEAGGIG, FLNFLYGIIFAGTAGMMLILS, and HSFICFTIGILFTLFLEIFDS.

The protein belongs to the ZIP transporter (TC 2.A.5) family.

The protein resides in the endoplasmic reticulum membrane. Its function is as follows. Probable zinc transporter that may mediate zinc remobilization from the endoplasmic reticulum under zinc limitation. The protein is Probable zinc transporter zip2 (zip2) of Schizosaccharomyces pombe (strain 972 / ATCC 24843) (Fission yeast).